Here is a 297-residue protein sequence, read N- to C-terminus: Probable GTP 3',8-cyclase (297 aa).

The region spanning 4-227 (RYGRQIRSFR…MQNRKKYVID (224 aa)) is the Radical SAM core domain. GTP is bound at residue arginine 13. [4Fe-4S] cluster-binding residues include cysteine 20 and cysteine 24. Residue tyrosine 26 coordinates S-adenosyl-L-methionine. Cysteine 27 lines the [4Fe-4S] cluster pocket. Lysine 61 contacts GTP. Position 65 (glycine 65) interacts with S-adenosyl-L-methionine. Position 91 (threonine 91) interacts with GTP. Serine 115 serves as a coordination point for S-adenosyl-L-methionine. Lysine 152 contributes to the GTP binding site. The [4Fe-4S] cluster site is built by cysteine 243 and cysteine 246. Residue 248–250 (RIR) participates in GTP binding. Residue cysteine 260 participates in [4Fe-4S] cluster binding.

This sequence belongs to the radical SAM superfamily. MoaA family. [4Fe-4S] cluster is required as a cofactor.

It carries out the reaction GTP + AH2 + S-adenosyl-L-methionine = (8S)-3',8-cyclo-7,8-dihydroguanosine 5'-triphosphate + 5'-deoxyadenosine + L-methionine + A + H(+). Its pathway is cofactor biosynthesis; molybdopterin biosynthesis. Functionally, catalyzes the cyclization of GTP to (8S)-3',8-cyclo-7,8-dihydroguanosine 5'-triphosphate. The chain is Probable GTP 3',8-cyclase from Methanococcus maripaludis (strain DSM 14266 / JCM 13030 / NBRC 101832 / S2 / LL).